The primary structure comprises 364 residues: MSKQTVALFFGGKSAEHEISIISARSIAAQIDRNRYELSPLYIDRDGKWHASECSQQVLDTDIAALLRSGTPESAGKRLDELTAAAAGECFDFGSFLKNTDVAFIALHGSYGEDGKLQGCLDTFGIPYTGCGLTASALAMDKVLTKLCAMNAGIAVAEFMTITSCAYMANPLETIVEITKRFDWPLFVKPASLGSSVGISKVRNAEELAAALENACGLDSKALVEAAISGREIEVAVLGNSDPLASEPGEIIPGSDFYSYEDKYIKNEAKIVIPADLPEGVAEEVRKAALTVFKALGCEGMARVDFFVENGTNRVILNEINTIPGFTDISMYPMMMAASGIGFAELVEKLLLLALEKRSITHKI.

An ATP-grasp domain is found at 146–352; the sequence is KLCAMNAGIA…FAELVEKLLL (207 aa). 179-234 is a binding site for ATP; that stretch reads TKRFDWPLFVKPASLGSSVGISKVRNAEELAAALENACGLDSKALVEAAISGREIE. Asp305, Glu319, and Asn321 together coordinate Mg(2+).

This sequence belongs to the D-alanine--D-alanine ligase family. Mg(2+) serves as cofactor. Mn(2+) is required as a cofactor.

It is found in the cytoplasm. It carries out the reaction 2 D-alanine + ATP = D-alanyl-D-alanine + ADP + phosphate + H(+). Its pathway is cell wall biogenesis; peptidoglycan biosynthesis. Its function is as follows. Cell wall formation. This chain is D-alanine--D-alanine ligase, found in Chlorobaculum tepidum (strain ATCC 49652 / DSM 12025 / NBRC 103806 / TLS) (Chlorobium tepidum).